Here is a 283-residue protein sequence, read N- to C-terminus: Zinc-finger homeodomain protein 8 (283 aa).

The ZF-HD dimerization-type; degenerate zinc-finger motif lies at 23-68 (YKECMRNHAAAMGGQAFDGCGEYMPASPDSLKCAACGCHRSFHRRA). 2 disordered regions span residues 131–171 (AGRA…TKFT) and 244–283 (GLGT…PISV). Residues 148–161 (GSAGGSGSGGGGIF) are compositionally biased toward gly residues. A DNA-binding region (homeobox) is located at residues 163-226 (RKRFRTKFTP…NHKNQLASSP (64 aa)). The segment covering 244 to 256 (GLGTGLGTGISGD) has biased composition (gly residues). Acidic residues predominate over residues 257 to 266 (GDGDDDDTDD). Residues 269–283 (PRAAVSSPSPSPISV) show a composition bias toward low complexity.

Homo- and heterodimer with other ZFHD proteins.

Its subcellular location is the nucleus. Its function is as follows. Putative transcription factor. This is Zinc-finger homeodomain protein 8 (ZHD8) from Oryza sativa subsp. japonica (Rice).